Here is a 333-residue protein sequence, read N- to C-terminus: Adenosine deaminase (333 aa).

The Zn(2+) site is built by H12 and H14. Residues H14, D16, and G170 each contribute to the substrate site. H197 lines the Zn(2+) pocket. E200 (proton donor) is an active-site residue. D278 serves as a coordination point for Zn(2+). Residue D279 coordinates substrate.

It belongs to the metallo-dependent hydrolases superfamily. Adenosine and AMP deaminases family. Adenosine deaminase subfamily. Zn(2+) is required as a cofactor.

It catalyses the reaction adenosine + H2O + H(+) = inosine + NH4(+). The enzyme catalyses 2'-deoxyadenosine + H2O + H(+) = 2'-deoxyinosine + NH4(+). Functionally, catalyzes the hydrolytic deamination of adenosine and 2-deoxyadenosine. This chain is Adenosine deaminase, found in Aliivibrio fischeri (strain MJ11) (Vibrio fischeri).